A 587-amino-acid polypeptide reads, in one-letter code: Lipoprotein LpqB (587 aa).

A signal peptide spans 1-19; sequence MERLMRLTILLFLGAVLAG. C20 carries the N-palmitoyl cysteine lipid modification. C20 is lipidated: S-diacylglycerol cysteine.

This sequence belongs to the LpqB lipoprotein family.

It localises to the cell membrane. The chain is Lipoprotein LpqB from Mycobacterium bovis (strain ATCC BAA-935 / AF2122/97).